Here is a 121-residue protein sequence, read N- to C-terminus: Ribonuclease P protein component (121 aa).

This sequence belongs to the RnpA family. As to quaternary structure, consists of a catalytic RNA component (M1 or rnpB) and a protein subunit.

It carries out the reaction Endonucleolytic cleavage of RNA, removing 5'-extranucleotides from tRNA precursor.. Its function is as follows. RNaseP catalyzes the removal of the 5'-leader sequence from pre-tRNA to produce the mature 5'-terminus. It can also cleave other RNA substrates such as 4.5S RNA. The protein component plays an auxiliary but essential role in vivo by binding to the 5'-leader sequence and broadening the substrate specificity of the ribozyme. The chain is Ribonuclease P protein component from Neisseria meningitidis serogroup A / serotype 4A (strain DSM 15465 / Z2491).